The primary structure comprises 873 residues: Tyrosine-protein kinase transforming protein Fps (873 aa).

Positions A1 to D46 are disordered. The span at Q11–S29 shows a compositional bias: polar residues. The 264-residue stretch at M50–E313 folds into the F-BAR domain. The tract at residues G445–G471 is disordered. Over residues Q456–R469 the composition is skewed to basic and acidic residues. In terms of domain architecture, SH2 spans W511–V600. One can recognise a Protein kinase domain in the interval V612–L865. ATP-binding positions include I618–V626 and K641. The active-site Proton acceptor is the D734. Y764 carries the post-translational modification Phosphotyrosine; by autocatalysis.

Belongs to the protein kinase superfamily. Tyr protein kinase family. Fes/fps subfamily.

The enzyme catalyses L-tyrosyl-[protein] + ATP = O-phospho-L-tyrosyl-[protein] + ADP + H(+). This Gallus gallus (Chicken) protein is Tyrosine-protein kinase transforming protein Fps (V-FPS).